The primary structure comprises 294 residues: Putative HTH-type transcriptional regulatory protein STK_12680 (294 aa).

The 53-residue stretch at L123–L175 folds into the HTH cro/C1-type domain. A DNA-binding region (H-T-H motif) is located at residues L134–R153.

The polypeptide is Putative HTH-type transcriptional regulatory protein STK_12680 (Sulfurisphaera tokodaii (strain DSM 16993 / JCM 10545 / NBRC 100140 / 7) (Sulfolobus tokodaii)).